The primary structure comprises 412 residues: Phosphate-repressible acid phosphatase (412 aa).

The N-terminal stretch at 1-19 (MLTKQTLLAFVGALALATG) is a signal peptide. 4 N-linked (GlcNAc...) asparagine glycosylation sites follow: Asn74, Asn121, Asn186, and Asn208. The Proton donor role is filled by Asp215. N-linked (GlcNAc...) asparagine glycans are attached at residues Asn217, Asn332, and Asn343.

The N-terminus is blocked.

Its subcellular location is the secreted. It carries out the reaction a phosphate monoester + H2O = an alcohol + phosphate. This Penicillium chrysogenum (Penicillium notatum) protein is Phosphate-repressible acid phosphatase (PHOA).